Reading from the N-terminus, the 295-residue chain is UDP-N-acetylenolpyruvoylglucosamine reductase (295 aa).

The FAD-binding PCMH-type domain occupies 24–188; that stretch reads KVGGNAEIFF…LKAVFKINKG (165 aa). Arginine 168 is a catalytic residue. Serine 217 serves as the catalytic Proton donor. Residue glutamate 287 is part of the active site.

The protein belongs to the MurB family. The cofactor is FAD.

The protein resides in the cytoplasm. The catalysed reaction is UDP-N-acetyl-alpha-D-muramate + NADP(+) = UDP-N-acetyl-3-O-(1-carboxyvinyl)-alpha-D-glucosamine + NADPH + H(+). Its pathway is cell wall biogenesis; peptidoglycan biosynthesis. Its function is as follows. Cell wall formation. This chain is UDP-N-acetylenolpyruvoylglucosamine reductase, found in Rickettsia massiliae (strain Mtu5).